A 109-amino-acid chain; its full sequence is Nucleoid-associated protein Bcer98_0019 (109 aa).

It belongs to the YbaB/EbfC family. As to quaternary structure, homodimer.

It localises to the cytoplasm. The protein resides in the nucleoid. In terms of biological role, binds to DNA and alters its conformation. May be involved in regulation of gene expression, nucleoid organization and DNA protection. The polypeptide is Nucleoid-associated protein Bcer98_0019 (Bacillus cytotoxicus (strain DSM 22905 / CIP 110041 / 391-98 / NVH 391-98)).